The following is a 494-amino-acid chain: Alpha-amylase-related protein (494 aa).

A signal peptide spans 1 to 20 (MIKFALALTLCLAGASLSLA). At Gln-21 the chain carries Pyrrolidone carboxylic acid. Cys-48 and Cys-104 are oxidised to a cystine. Residues Asn-118, Gln-169, and Asp-178 each contribute to the Ca(2+) site. A disulfide bridge connects residues Cys-157 and Cys-171. Position 206 (Arg-206) interacts with chloride. The active-site Nucleophile is Asp-208. His-212 provides a ligand contact to Ca(2+). Glu-245 serves as the catalytic Proton donor. Asn-308 and Arg-343 together coordinate chloride. Cystine bridges form between Cys-376-Cys-382, Cys-418-Cys-441, and Cys-448-Cys-460.

Belongs to the glycosyl hydrolase 13 family. Monomer. Requires Ca(2+) as cofactor. Chloride is required as a cofactor.

It is found in the secreted. It catalyses the reaction Endohydrolysis of (1-&gt;4)-alpha-D-glucosidic linkages in polysaccharides containing three or more (1-&gt;4)-alpha-linked D-glucose units.. This Drosophila bakoue (Fruit fly) protein is Alpha-amylase-related protein (Amyrel).